Reading from the N-terminus, the 588-residue chain is Tripartite motif-containing protein 29 (588 aa).

The interval 1–66 (MEAADASRSN…GSALKPGEGR (66 aa)) is disordered. Phosphoserine is present on residues Ser-21, Ser-28, Ser-58, and Ser-104. Position 106 is a phosphotyrosine (Tyr-106). The B box-type zinc finger occupies 220 to 260 (FEARKCPVHGKTMELFCQTDQTCICYLCMFQEHKNHSTVTV). Zn(2+)-binding residues include Cys-225, His-228, Cys-247, and His-252. Positions 259 to 352 (TVEEAKAEKE…VKVIMDALDE (94 aa)) form a coiled coil. A Phosphothreonine modification is found at Thr-476. Residue Ser-489 is modified to Phosphoserine.

As to quaternary structure, interacts with VIM and HINT1. Interacts with IKBKG/NEMO. Interacts with STING1. In terms of processing, constitutively phosphorylated by PKC on serine/threonine in A431 cells. In terms of tissue distribution, expressed in placenta, prostate and thymus.

It localises to the cytoplasm. It is found in the lysosome. Plays a crucial role in the regulation of macrophage activation in response to viral or bacterial infections within the respiratory tract. Mechanistically, TRIM29 interacts with IKBKG/NEMO in the lysosome where it induces its 'Lys-48' ubiquitination and subsequent degradation. In turn, the expression of type I interferons and the production of pro-inflammatory cytokines are inhibited. Additionally, induces the 'Lys-48' ubiquitination of STING1 in a similar way, leading to its degradation. This chain is Tripartite motif-containing protein 29 (TRIM29), found in Homo sapiens (Human).